Reading from the N-terminus, the 211-residue chain is Large ribosomal subunit protein uL3 (211 aa).

Gln-150 is subject to N5-methylglutamine.

It belongs to the universal ribosomal protein uL3 family. As to quaternary structure, part of the 50S ribosomal subunit. Forms a cluster with proteins L14 and L19. In terms of processing, methylated by PrmB.

Its function is as follows. One of the primary rRNA binding proteins, it binds directly near the 3'-end of the 23S rRNA, where it nucleates assembly of the 50S subunit. This chain is Large ribosomal subunit protein uL3, found in Pseudomonas fluorescens (strain SBW25).